A 112-amino-acid chain; its full sequence is Diuretic hormone class 2 (112 aa).

The first 24 residues, 1–24 (MVRATCLLASCVLFALLLIVPASA), serve as a signal peptide directing secretion. A propeptide spanning residues 25–71 (YPRYPSNYFREEGQYEPEEIMDMLNRLGNLIQMERKMENYKEDITSE) is cleaved from the precursor. Pro104 bears the Proline amide mark. Residues 108–112 (RRDAH) constitute a propeptide that is removed on maturation.

As to expression, expressed in corpora cardiaca (CC), corpora allata (CA), antennal lobe (AL) and gnathal ganglion (GNG) (at protein level). Expression in CC, CA and AL detected in most animals, expression in GNG in few animals (at protein level).

Its subcellular location is the secreted. Functionally, regulation of fluid secretion. Stimulates Malpighian tubule fluid secretion. This Agrotis ipsilon (Black cutworm moth) protein is Diuretic hormone class 2.